A 522-amino-acid chain; its full sequence is Neuropeptide FF receptor 2 (522 aa).

Over 1-147 the chain is Extracellular; it reads MNSFFGTPAA…NYYLHQPQVA (147 aa). The interval 25-49 is disordered; the sequence is KEAGRERRALSVQQRGGPAWSGSLE. Residues asparagine 110, asparagine 122, and asparagine 133 are each glycosylated (N-linked (GlcNAc...) asparagine). Residues 148–168 traverse the membrane as a helical segment; it reads AIFIISYFLIFFLCMMGNTVV. Topologically, residues 169–184 are cytoplasmic; that stretch reads CFIVMRNKHMHTVTNL. A helical membrane pass occupies residues 185-205; sequence FILNLAISDLLVGIFCMPITL. At 206–221 the chain is on the extracellular side; it reads LDNIIAGWPFGNTMCK. Cysteines 220 and 308 form a disulfide. The chain crosses the membrane as a helical span at residues 222 to 242; it reads ISGLVQGISVAASVFTLVAIA. Residues 243–262 lie on the Cytoplasmic side of the membrane; it reads VDRFQCVVYPFKPKLTIKTA. The chain crosses the membrane as a helical span at residues 263–283; sequence FVIIMIIWVLAITIMSPSAVM. Topologically, residues 284–319 are extracellular; the sequence is LHVQEEKYYRVRLNSQNKTSPVYWCREDWPNQEMRK. Asparagine 300 carries N-linked (GlcNAc...) asparagine glycosylation. A helical transmembrane segment spans residues 320 to 340; it reads IYTTVLFANIYLAPLSLIVIM. Over 341 to 377 the chain is Cytoplasmic; the sequence is YGRIGISLFRAAVPHTGRKNQEQWHVVSRKKQKIIKM. Residues 378-398 form a helical membrane-spanning segment; the sequence is LLIVALLFILSWLPLWTLMML. At 399–413 the chain is on the extracellular side; the sequence is SDYADLSPNELQIIN. The helical transmembrane segment at 414–434 threads the bilayer; sequence IYIYPFAHWLAFGNSSVNPII. Residues 435–522 are Cytoplasmic-facing; it reads YGFFNENFRR…LKETTNSSEI (88 aa).

Belongs to the G-protein coupled receptor 1 family. Isoform 1 is abundant in placenta. Relatively highly expressed in thymus, testis, and small intestine. Expressed at low levels in several tissues including spleen, prostate, brain, heart, ovary, colon, kidney, lung, liver and pancreas and not expressed in skeletal muscle and leukocytes. Isoform 2 expression is highest in placenta (but at relatively low level compared to isoform 1). Very low level of expression in numerous tissues including adipose tissue and many brain regions. Isoform 3 is expressed in brain and heart and, at lower levels, in kidney, liver, lung and pancreas.

Its subcellular location is the cell membrane. Functionally, receptor for NPAF (A-18-F-amide) and NPFF (F-8-F-amide) neuropeptides, also known as morphine-modulating peptides. Can also be activated by a variety of naturally occurring or synthetic FMRF-amide like ligands. This receptor mediates its action by association with G proteins that activate a phosphatidylinositol-calcium second messenger system. This Homo sapiens (Human) protein is Neuropeptide FF receptor 2.